A 247-amino-acid polypeptide reads, in one-letter code: Homeobox-leucine zipper protein HOX15 (247 aa).

Residues 1-44 (MAQDDEDVGLALGLSLGSGGHRRQRESRDEAPSSAAASLLTLRL) are disordered. Over residues 32 to 44 (PSSAAASLLTLRL) the composition is skewed to low complexity. A DNA-binding region (homeobox) is located at residues 91–150 (NSRKKLRLSKEQSALLEDRFKEHSTLNPKQKVALAKQLNLRPRQVEVWFQNRRARTKLKQ). Residues 149-193 (KQTEVDCELLKRCCETLTEENRRLHRELQQLRALTHSTAAGFFMA) form a leucine-zipper region. The tract at residues 221–247 (SPTAAADRTNKPTAPHLFSPFAKSAAC) is disordered.

The protein belongs to the HD-ZIP homeobox family. Class II subfamily. In terms of tissue distribution, expressed in seedlings, stems, leaf blades and panicles.

It is found in the nucleus. In terms of biological role, probable transcription factor. The polypeptide is Homeobox-leucine zipper protein HOX15 (HOX15) (Oryza sativa subsp. japonica (Rice)).